Consider the following 459-residue polypeptide: Glycosyl hydrolase family 109 protein 1 (459 aa).

Positions 1–31 form a signal peptide, tat-type signal; it reads MHNIHRRHFLKAAGAVTAGLVTANIALNANA. Residues 64–65, aspartate 86, 135–138, 155–156, and asparagine 184 each bind NAD(+); these read ER, WEWH, and EV. Residues tyrosine 213, arginine 232, 244 to 247, and tyrosine 326 each bind substrate; that span reads YPTH. Residue tyrosine 244 participates in NAD(+) binding.

It belongs to the Gfo/Idh/MocA family. Glycosyl hydrolase 109 subfamily. NAD(+) serves as cofactor. Predicted to be exported by the Tat system. The position of the signal peptide cleavage has not been experimentally proven.

Glycosidase. The sequence is that of Glycosyl hydrolase family 109 protein 1 from Shewanella sp. (strain MR-7).